Reading from the N-terminus, the 706-residue chain is Frizzled-6 (706 aa).

Positions 1-18 (MEMFTFLLTCIFLPLLRG) are cleaved as a signal peptide. The FZ domain maps to 19-132 (HSLFTCEPIT…CDRLQYCDET (114 aa)). Residues 19-201 (HSLFTCEPIT…SDELEFAKSF (183 aa)) are Extracellular-facing. 5 disulfide bridges follow: C24/C85, C32/C78, C69/C106, C95/C129, and C99/C123. A glycan (N-linked (GlcNAc...) asparagine) is linked at N38. A helical transmembrane segment spans residues 202 to 222 (IGTVSIFCLCATLFTFLTFLI). The Cytoplasmic segment spans residues 223-233 (DVRRFRYPERP). The chain crosses the membrane as a helical span at residues 234-254 (IIYYSVCYSIVSLMYFIGFLL). At 255–284 (GDSTACNKADEKLELGDTVVLGSQNKACTV) the chain is on the extracellular side. A helical transmembrane segment spans residues 285 to 305 (LFMLLYFFTMAGTVWWVILTI). Over 306–324 (TWFLAAGRKWSCEAIEQKA) the chain is Cytoplasmic. Residues 325–345 (VWFHAVAWGTPGFLTVMLLAM) form a helical membrane-spanning segment. The Extracellular portion of the chain corresponds to 346–370 (NKVEGDNISGVCFVGLYDLDASRYF). An N-linked (GlcNAc...) asparagine glycan is attached at N352. The chain crosses the membrane as a helical span at residues 371–391 (VLLPLCLCVFVGLSLLLAGII). Topologically, residues 392 to 416 (SLNHVRQVIQHDGRNQEKLKKFMIR) are cytoplasmic. Residues 417 to 437 (IGVFSGLYLVPLVTLLGCYVY) form a helical membrane-spanning segment. Topologically, residues 438–473 (EQVNRITWEITWVSDHCRQYHIPCPYQAKAKARPEL) are extracellular. The helical transmembrane segment at 474–494 (ALFMIKYLMTLIVGISAVFWV) threads the bilayer. At 495 to 706 (GSKKTCTEWA…EQGGGCHSDT (212 aa)) the chain is on the cytoplasmic side. A Lys-Thr-X-X-X-Trp motif, mediates interaction with the PDZ domain of Dvl family members motif is present at residues 498–503 (KTCTEW). Residues 588–706 (EIQTSPETSM…EQGGGCHSDT (119 aa)) are disordered. The segment covering 646–658 (ARSEGRISPKSDI) has biased composition (basic and acidic residues). At S653 the chain carries Phosphoserine. The segment covering 662–672 (GLAQSNNLQVP) has biased composition (polar residues). Residues 673–685 (SSSEPSSLKGSTS) show a composition bias toward low complexity. A compositionally biased stretch (basic and acidic residues) spans 694-706 (VRKEQGGGCHSDT).

It belongs to the G-protein coupled receptor Fz/Smo family. As to quaternary structure, interacts with LMBR1L. Post-translationally, ubiquitinated by ZNRF3, leading to its degradation by the proteasome. In terms of tissue distribution, detected in adult heart, brain, placenta, lung, liver, skeletal muscle, kidney, pancreas, thymus, prostate, testis, ovary, small intestine and colon. In the fetus, expressed in brain, lung, liver and kidney.

It is found in the membrane. Its subcellular location is the cell membrane. The protein localises to the cell surface. The protein resides in the apical cell membrane. It localises to the cytoplasmic vesicle membrane. It is found in the endoplasmic reticulum membrane. Its function is as follows. Receptor for Wnt proteins. Most of frizzled receptors are coupled to the beta-catenin canonical signaling pathway, which leads to the activation of disheveled proteins, inhibition of GSK-3 kinase, nuclear accumulation of beta-catenin and activation of Wnt target genes. A second signaling pathway involving PKC and calcium fluxes has been seen for some family members, but it is not yet clear if it represents a distinct pathway or if it can be integrated in the canonical pathway, as PKC seems to be required for Wnt-mediated inactivation of GSK-3 kinase. Both pathways seem to involve interactions with G-proteins. May be involved in transduction and intercellular transmission of polarity information during tissue morphogenesis and/or in differentiated tissues. Together with FZD3, is involved in the neural tube closure and plays a role in the regulation of the establishment of planar cell polarity (PCP), particularly in the orientation of asymmetric bundles of stereocilia on the apical faces of a subset of auditory and vestibular sensory cells located in the inner ear. The protein is Frizzled-6 (FZD6) of Homo sapiens (Human).